Consider the following 219-residue polypeptide: Small ribosomal subunit protein uS3c (219 aa).

The 80-residue stretch at I39–E118 folds into the KH type-2 domain.

This sequence belongs to the universal ribosomal protein uS3 family. Part of the 30S ribosomal subunit.

Its subcellular location is the plastid. This chain is Small ribosomal subunit protein uS3c (rps3), found in Cuscuta obtusiflora (Peruvian dodder).